Reading from the N-terminus, the 369-residue chain is MELATAGKVNEVLFMNRGEGESSYAQNSSFTQQVASMAQPALENAVETLFSRDFHLQALNAADLGCAAGPNTFAVISTIKRMMEKKCRELNCQTLELQVYLNDLFGNDFNTLFKGLSSEVIGNKCEEVPCYVMGVPGSFHGRLFPRNSLHLVHSSYSVHWLTQAPKGLTSREGLALNKGKIYISKTSPPVVREAYLSQFHEDFTMFLNARSQEVVPNGCMVLILRGRQCSDPSDMQSCFTWELLAMAIAELVSQGLIDEDKLDTFNIPSYFASLEEVKDIVERDGSFTIDHIEGFDLDSVEMQENDKWVRGEKFTKVVRAFTEPIISNQFGPEIMDKLYDKFTHIVVSDLEAKLPKTTSIILVLSKIDG.

Tyr-24 is an S-adenosyl-L-homocysteine binding site. Caffeine is bound at residue Thr-31. 6 residues coordinate S-adenosyl-L-homocysteine: Cys-66, Asn-71, Asp-103, Leu-104, Ser-138, and Phe-139. Positions 156, 159, and 160 each coordinate caffeine. Position 177 (Asn-177) interacts with Mg(2+). Caffeine is bound at residue Arg-225. The Mg(2+) site is built by Asp-263, Phe-265, and Asn-266. Phe-321 is a caffeine binding site.

Belongs to the methyltransferase superfamily. Type-7 methyltransferase family. It depends on Mg(2+) as a cofactor. As to expression, expressed in young leaves and flowers.

The enzyme catalyses 7-methylxanthine + S-adenosyl-L-methionine = theobromine + S-adenosyl-L-homocysteine + H(+). It carries out the reaction theobromine + S-adenosyl-L-methionine = caffeine + S-adenosyl-L-homocysteine + H(+). It catalyses the reaction 1,7-dimethylxanthine + S-adenosyl-L-methionine = caffeine + S-adenosyl-L-homocysteine + H(+). It participates in alkaloid biosynthesis. Involved in the biosynthesis of caffeine. Catalyzes the conversion of 7-methylxanthine (7mX) to theobromine and of theobromine to caffeine. Has 3-N- and 1-N-methylation activity. This chain is 3,7-dimethylxanthine N-methyltransferase TCS1, found in Camellia sinensis (Tea plant).